The primary structure comprises 460 residues: tRNA modification GTPase MnmE (460 aa).

3 residues coordinate (6S)-5-formyl-5,6,7,8-tetrahydrofolate: arginine 29, glutamate 86, and lysine 126. In terms of domain architecture, TrmE-type G spans glycine 222–glycine 383. Residue asparagine 232 participates in K(+) binding. Residues asparagine 232–serine 237, threonine 251–threonine 257, aspartate 276–glycine 279, and asparagine 341–aspartate 344 contribute to the GTP site. Mg(2+) is bound at residue serine 236. K(+) is bound by residues threonine 251, isoleucine 253, and threonine 256. Threonine 257 is a binding site for Mg(2+). Lysine 460 is a (6S)-5-formyl-5,6,7,8-tetrahydrofolate binding site.

This sequence belongs to the TRAFAC class TrmE-Era-EngA-EngB-Septin-like GTPase superfamily. TrmE GTPase family. Homodimer. Heterotetramer of two MnmE and two MnmG subunits. K(+) serves as cofactor.

The protein resides in the cytoplasm. Functionally, exhibits a very high intrinsic GTPase hydrolysis rate. Involved in the addition of a carboxymethylaminomethyl (cmnm) group at the wobble position (U34) of certain tRNAs, forming tRNA-cmnm(5)s(2)U34. This Pseudoalteromonas atlantica (strain T6c / ATCC BAA-1087) protein is tRNA modification GTPase MnmE.